A 177-amino-acid chain; its full sequence is Putative adenylate kinase (177 aa).

Gly-10, Gly-12, Lys-13, Thr-14, and Thr-15 together coordinate ATP. Positions 30-50 (NLRDYALEKGIGEMKENELEI) are NMP. The segment at 99–109 (ERGYGREKLGE) is LID. Residues Arg-100 and Lys-138 each contribute to the ATP site.

It belongs to the adenylate kinase family. AK6 subfamily. In terms of assembly, interacts with uS11. Not a structural component of 40S pre-ribosomes, but transiently interacts with them by binding to uS11.

It catalyses the reaction AMP + ATP = 2 ADP. It carries out the reaction ATP + H2O = ADP + phosphate + H(+). Its function is as follows. Broad-specificity nucleoside monophosphate (NMP) kinase that catalyzes the reversible transfer of the terminal phosphate group between nucleoside triphosphates and monophosphates. Also has ATPase activity. Involved in the late maturation steps of the 30S ribosomal particles, specifically 16S rRNA maturation. While NMP activity is not required for ribosome maturation, ATPase activity is. Associates transiently with small ribosomal subunit protein uS11. ATP hydrolysis breaks the interaction with uS11. May temporarily remove uS11 from the ribosome to enable a conformational change of the ribosomal RNA that is needed for the final maturation step of the small ribosomal subunit. In Thermococcus kodakarensis (strain ATCC BAA-918 / JCM 12380 / KOD1) (Pyrococcus kodakaraensis (strain KOD1)), this protein is Putative adenylate kinase.